The primary structure comprises 401 residues: Inactive (1R,4R,5S)-(-)-guaia-6,10(14)-diene synthase (401 aa).

The segment at 1-20 (MVKFDSGSESEMTNGDELHI) is disordered. Positions 134 and 139 each coordinate Mg(2+). Residues 134–138 (DDQFD) carry the DDXXD motif motif. Residue R242 participates in substrate binding. S292 lines the Mg(2+) pocket. K295 provides a ligand contact to substrate. Residue D296 participates in Mg(2+) binding. 375 to 376 (RY) contributes to the substrate binding site.

Belongs to the terpene synthase family. Mg(2+) is required as a cofactor.

In Gibberella fujikuroi (strain CBS 195.34 / IMI 58289 / NRRL A-6831) (Bakanae and foot rot disease fungus), this protein is Inactive (1R,4R,5S)-(-)-guaia-6,10(14)-diene synthase.